The following is a 237-amino-acid chain: MTNHQKRLAVPKSWPVERKEEAYTTKAAAGPHGEEGVPLLIVLRDVLGYVDSKKEARYALEQDSILINGTAVSDERRPVGMFDILAFDEREEYYRIFPDEGGRLSLTPIDEDAAGSKLGKIVGKTQVAGGDTQLSLHDGETLLVEDATAYDTNDSIVVSNDGEEIVAHFTYEEGALVTAVSGAHAGRIGTIDEIQVTPGSSANNVLIDAENDDERFETVEEYVVVIDENFTDGGDDE.

An S4 RNA-binding domain is found at 37 to 99 (VPLLIVLRDV…REEYYRIFPD (63 aa)).

The protein belongs to the eukaryotic ribosomal protein eS4 family.

The protein is Small ribosomal subunit protein eS4 of Natronomonas pharaonis (strain ATCC 35678 / DSM 2160 / CIP 103997 / JCM 8858 / NBRC 14720 / NCIMB 2260 / Gabara) (Halobacterium pharaonis).